The primary structure comprises 1077 residues: Carbamoyl phosphate synthase large chain (1077 aa).

The segment at 1-403 (MPKRTDIQSI…SLHKALRGLE (403 aa)) is carboxyphosphate synthetic domain. ATP is bound by residues Arg129, Arg169, Gly175, Gly176, Glu208, Leu210, Glu215, Gly241, Ile242, His243, Gln285, and Glu299. The 196-residue stretch at 133–328 (DKAMKSIGLE…IAKIAAKLAV (196 aa)) folds into the ATP-grasp 1 domain. Mg(2+) contacts are provided by Gln285, Glu299, and Asn301. 3 residues coordinate Mn(2+): Gln285, Glu299, and Asn301. An oligomerization domain region spans residues 404-553 (VGATGFDEMV…YSSYDDECEA (150 aa)). The interval 554–935 (NPTDKEKIMV…AYAKAELGCG (382 aa)) is carbamoyl phosphate synthetic domain. Positions 678-869 (QQAVDRLGLL…LAKIAARVMA (192 aa)) constitute an ATP-grasp 2 domain. The ATP site is built by Arg714, Arg753, Leu755, Glu760, Gly785, Val786, His787, Ser788, Gln828, and Glu840. Mg(2+) contacts are provided by Gln828, Glu840, and Asn842. Positions 828, 840, and 842 each coordinate Mn(2+). The region spanning 936-1077 (NVYPEGGRAL…HAQVQASLKA (142 aa)) is the MGS-like domain. The allosteric domain stretch occupies residues 936-1077 (NVYPEGGRAL…HAQVQASLKA (142 aa)).

Belongs to the CarB family. Composed of two chains; the small (or glutamine) chain promotes the hydrolysis of glutamine to ammonia, which is used by the large (or ammonia) chain to synthesize carbamoyl phosphate. Tetramer of heterodimers (alpha,beta)4. Requires Mg(2+) as cofactor. Mn(2+) is required as a cofactor.

The catalysed reaction is hydrogencarbonate + L-glutamine + 2 ATP + H2O = carbamoyl phosphate + L-glutamate + 2 ADP + phosphate + 2 H(+). The enzyme catalyses hydrogencarbonate + NH4(+) + 2 ATP = carbamoyl phosphate + 2 ADP + phosphate + 2 H(+). Its pathway is amino-acid biosynthesis; L-arginine biosynthesis; carbamoyl phosphate from bicarbonate: step 1/1. It functions in the pathway pyrimidine metabolism; UMP biosynthesis via de novo pathway; (S)-dihydroorotate from bicarbonate: step 1/3. Functionally, large subunit of the glutamine-dependent carbamoyl phosphate synthetase (CPSase). CPSase catalyzes the formation of carbamoyl phosphate from the ammonia moiety of glutamine, carbonate, and phosphate donated by ATP, constituting the first step of 2 biosynthetic pathways, one leading to arginine and/or urea and the other to pyrimidine nucleotides. The large subunit (synthetase) binds the substrates ammonia (free or transferred from glutamine from the small subunit), hydrogencarbonate and ATP and carries out an ATP-coupled ligase reaction, activating hydrogencarbonate by forming carboxy phosphate which reacts with ammonia to form carbamoyl phosphate. This chain is Carbamoyl phosphate synthase large chain, found in Vibrio vulnificus (strain CMCP6).